The primary structure comprises 379 residues: Wnt inhibitory factor 1 (379 aa).

The first 28 residues, 1–28 (MARRSAFPAAALWLWSILLCLLALRAEA), serve as a signal peptide directing secretion. A WIF domain is found at 38 to 177 (LWIDAHQARV…PQNAIFFKTC (140 aa)). A glycan (N-linked (GlcNAc...) asparagine) is linked at Asn88. 7 cysteine pairs are disulfide-bonded: Cys140-Cys177, Cys182-Cys192, Cys186-Cys198, Cys200-Cys209, Cys214-Cys224, Cys218-Cys230, and Cys232-Cys241. EGF-like domains are found at residues 178-210 (QQAECPGGCRNGGFCNERRICECPDGFHGPHCE), 211-242 (KALCTPRCMNGGLCVTPGFCICPPGFYGVNCD), 243-271 (KANCSTTCFNGGTCFYPGKCICPPGLEGE), 274-306 (EISKCPQPCRNGGKCIGKSKCKCSKGYQGDLCS), and 307-338 (KPVCEPGCGAHGTCHEPNKCQCQEGWHGRHCN). The N-linked (GlcNAc...) asparagine glycan is linked to Asn245. 8 disulfides stabilise this stretch: Cys246-Cys256, Cys250-Cys262, Cys278-Cys288, Cys282-Cys294, Cys296-Cys305, Cys310-Cys320, Cys314-Cys326, and Cys328-Cys337. The interval 354 to 379 (AQLRQHTPSLKKAEERRDPPESNYIW) is disordered. Basic and acidic residues predominate over residues 364–373 (KKAEERRDPP).

As to quaternary structure, interacts with MYOC.

It is found in the secreted. Functionally, binds to WNT proteins and inhibits their activities. May be involved in mesoderm segmentation. The protein is Wnt inhibitory factor 1 (WIF1) of Homo sapiens (Human).